We begin with the raw amino-acid sequence, 145 residues long: D-aminoacyl-tRNA deacylase (145 aa).

Residues 137–138 (GP) carry the Gly-cisPro motif, important for rejection of L-amino acids motif.

This sequence belongs to the DTD family. As to quaternary structure, homodimer.

Its subcellular location is the cytoplasm. The catalysed reaction is glycyl-tRNA(Ala) + H2O = tRNA(Ala) + glycine + H(+). It catalyses the reaction a D-aminoacyl-tRNA + H2O = a tRNA + a D-alpha-amino acid + H(+). Functionally, an aminoacyl-tRNA editing enzyme that deacylates mischarged D-aminoacyl-tRNAs. Also deacylates mischarged glycyl-tRNA(Ala), protecting cells against glycine mischarging by AlaRS. Acts via tRNA-based rather than protein-based catalysis; rejects L-amino acids rather than detecting D-amino acids in the active site. By recycling D-aminoacyl-tRNA to D-amino acids and free tRNA molecules, this enzyme counteracts the toxicity associated with the formation of D-aminoacyl-tRNA entities in vivo and helps enforce protein L-homochirality. This Ectopseudomonas mendocina (strain ymp) (Pseudomonas mendocina) protein is D-aminoacyl-tRNA deacylase.